The primary structure comprises 314 residues: MMVEAKVPLKLTLFGEHAVVYDRPAIAMTISESLKVKVSENDKFLIISPSLNIKGVKLDLNEMKIESDEAKKVLRYVFEVLNYFEMKKPVKIEINSTVEPSVGLGTSAAVIVGTVAAYSKYLGIDLSRDEIAKISHNIELKVQGIASRMDTYTETYGGLIYFPAGGKGFEKIDTNFELTAGYIRRSMSTADVLWRVRTLKESNKEVFENILDVIGEITNRAKSLIVEQNFEELGLLMYVNHGLLFSLGITSPEADEIVSRAKQLGIKGCKISGGGAGGSIICIKSVEAEVLLRSYNARIVNSTLTKDGVIFSIL.

103–109 (GLGTSAA) serves as a coordination point for ATP. The active-site Proton acceptor is Asp-150.

Belongs to the GHMP kinase family. Mevalonate kinase subfamily. In terms of assembly, homodimer. Mg(2+) serves as cofactor.

Its subcellular location is the cytoplasm. It carries out the reaction (R)-mevalonate + ATP = (R)-5-phosphomevalonate + ADP + H(+). Its pathway is isoprenoid biosynthesis; isopentenyl diphosphate biosynthesis via mevalonate pathway; isopentenyl diphosphate from (R)-mevalonate: step 1/3. Functionally, catalyzes the phosphorylation of (R)-mevalonate (MVA) to (R)-mevalonate 5-phosphate (MVAP). Functions in the mevalonate (MVA) pathway leading to isopentenyl diphosphate (IPP), a key precursor for the biosynthesis of isoprenoid compounds such as archaeal membrane lipids. The sequence is that of Mevalonate kinase from Saccharolobus solfataricus (strain ATCC 35092 / DSM 1617 / JCM 11322 / P2) (Sulfolobus solfataricus).